A 130-amino-acid chain; its full sequence is ATP synthase epsilon chain (130 aa).

The protein belongs to the ATPase epsilon chain family. In terms of assembly, F-type ATPases have 2 components, CF(1) - the catalytic core - and CF(0) - the membrane proton channel. CF(1) has five subunits: alpha(3), beta(3), gamma(1), delta(1), epsilon(1). CF(0) has three main subunits: a, b and c.

It localises to the cell inner membrane. Produces ATP from ADP in the presence of a proton gradient across the membrane. This chain is ATP synthase epsilon chain, found in Campylobacter lari (strain RM2100 / D67 / ATCC BAA-1060).